Here is a 246-residue protein sequence, read N- to C-terminus: uncharacterized protein (246 aa).

A coiled-coil region spans residues 204–243; it reads TTKLKKLEKEIHELPYMLINGKITYEEYKKRIREIEKEIG.

This is an uncharacterized protein from Aquifex aeolicus (strain VF5).